The sequence spans 71 residues: Large ribosomal subunit protein uL29 (71 aa).

This sequence belongs to the universal ribosomal protein uL29 family.

The chain is Large ribosomal subunit protein uL29 from Methanocella arvoryzae (strain DSM 22066 / NBRC 105507 / MRE50).